A 193-amino-acid chain; its full sequence is Probable GTP-binding protein EngB (193 aa).

Residues 24–193 (NIPEIALAGR…ELKAALAELL (170 aa)) form the EngB-type G domain. GTP is bound by residues 32 to 39 (GRSNVGKS), 59 to 63 (GKTRT), 77 to 80 (DLPG), 144 to 147 (TKAD), and 174 to 176 (FSA). The Mg(2+) site is built by S39 and T61.

Belongs to the TRAFAC class TrmE-Era-EngA-EngB-Septin-like GTPase superfamily. EngB GTPase family. It depends on Mg(2+) as a cofactor.

Functionally, necessary for normal cell division and for the maintenance of normal septation. The sequence is that of Probable GTP-binding protein EngB from Syntrophomonas wolfei subsp. wolfei (strain DSM 2245B / Goettingen).